Reading from the N-terminus, the 234-residue chain is Structural PPIase-like protein L605 (234 aa).

Positions Y18 to A205 constitute a PPIase cyclophilin-type domain.

This sequence belongs to the cyclophilin-type PPIase family. In terms of assembly, homotrimer.

The protein localises to the virion. It localises to the host cytoplasm. The polypeptide is Structural PPIase-like protein L605 (Acanthamoeba polyphaga mimivirus (APMV)).